The following is a 484-amino-acid chain: UDP-N-acetylmuramoyl-L-alanyl-D-glutamate--2,6-diaminopimelate ligase (484 aa).

UDP-N-acetyl-alpha-D-muramoyl-L-alanyl-D-glutamate is bound at residue Ser29. Gly108–Ser114 contacts ATP. Residues Thr150 to Thr151, Ser177, Gln183, and Arg185 each bind UDP-N-acetyl-alpha-D-muramoyl-L-alanyl-D-glutamate. Position 217 is an N6-carboxylysine (Lys217). Meso-2,6-diaminopimelate-binding positions include Arg381, Asp405–Arg408, Gly453, and Glu457. A Meso-diaminopimelate recognition motif motif is present at residues Asp405–Arg408.

This sequence belongs to the MurCDEF family. MurE subfamily. Mg(2+) is required as a cofactor. In terms of processing, carboxylation is probably crucial for Mg(2+) binding and, consequently, for the gamma-phosphate positioning of ATP.

Its subcellular location is the cytoplasm. It catalyses the reaction UDP-N-acetyl-alpha-D-muramoyl-L-alanyl-D-glutamate + meso-2,6-diaminopimelate + ATP = UDP-N-acetyl-alpha-D-muramoyl-L-alanyl-gamma-D-glutamyl-meso-2,6-diaminopimelate + ADP + phosphate + H(+). It participates in cell wall biogenesis; peptidoglycan biosynthesis. In terms of biological role, catalyzes the addition of meso-diaminopimelic acid to the nucleotide precursor UDP-N-acetylmuramoyl-L-alanyl-D-glutamate (UMAG) in the biosynthesis of bacterial cell-wall peptidoglycan. This is UDP-N-acetylmuramoyl-L-alanyl-D-glutamate--2,6-diaminopimelate ligase from Mesorhizobium japonicum (strain LMG 29417 / CECT 9101 / MAFF 303099) (Mesorhizobium loti (strain MAFF 303099)).